We begin with the raw amino-acid sequence, 298 residues long: GTPase Era (298 aa).

An Era-type G domain is found at 3 to 170 (KSGFVTIVGR…VELMKKAMPE (168 aa)). The tract at residues 11-18 (GRPNVGKS) is G1. 11-18 (GRPNVGKS) contacts GTP. The G2 stretch occupies residues 37–41 (QTTRN). Residues 58-61 (DTPG) form a G3 region. Residues 58–62 (DTPGI) and 120–123 (NKVD) contribute to the GTP site. The interval 120 to 123 (NKVD) is G4. The interval 149-151 (ISA) is G5. One can recognise a KH type-2 domain in the interval 201–278 (LRDEVPHGIA…NLKIWVKVRK (78 aa)).

Belongs to the TRAFAC class TrmE-Era-EngA-EngB-Septin-like GTPase superfamily. Era GTPase family. In terms of assembly, monomer.

The protein localises to the cytoplasm. The protein resides in the cell membrane. Functionally, an essential GTPase that binds both GDP and GTP, with rapid nucleotide exchange. Plays a role in 16S rRNA processing and 30S ribosomal subunit biogenesis and possibly also in cell cycle regulation and energy metabolism. This is GTPase Era from Clostridium beijerinckii (strain ATCC 51743 / NCIMB 8052) (Clostridium acetobutylicum).